Here is a 239-residue protein sequence, read N- to C-terminus: Uridylate kinase (239 aa).

12-15 contributes to the ATP binding site; sequence KLSG. The tract at residues 21-26 is involved in allosteric activation by GTP; it reads GEQGFG. Glycine 55 contributes to the UMP binding site. Residues glycine 56 and arginine 60 each contribute to the ATP site. UMP-binding positions include aspartate 75 and 136–143; that span reads TGNPYFST. 3 residues coordinate ATP: threonine 163, tyrosine 169, and aspartate 172.

Belongs to the UMP kinase family. In terms of assembly, homohexamer.

It localises to the cytoplasm. It catalyses the reaction UMP + ATP = UDP + ADP. Its pathway is pyrimidine metabolism; CTP biosynthesis via de novo pathway; UDP from UMP (UMPK route): step 1/1. Its activity is regulated as follows. Allosterically activated by GTP. Inhibited by UTP. In terms of biological role, catalyzes the reversible phosphorylation of UMP to UDP. In Koribacter versatilis (strain Ellin345), this protein is Uridylate kinase.